The sequence spans 586 residues: Glutamate--tRNA ligase (586 aa).

Positions 84-111 (LTDIESEDTTDTYDLPSLPGVSDDEPTQ) are disordered. A compositionally biased stretch (acidic residues) spans 85–94 (TDIESEDTTD). A 'HIGH' region motif is present at residues 119–129 (PNPNGPWHIGH).

Belongs to the class-I aminoacyl-tRNA synthetase family. Glutamate--tRNA ligase type 2 subfamily.

The protein resides in the cytoplasm. It catalyses the reaction tRNA(Glu) + L-glutamate + ATP = L-glutamyl-tRNA(Glu) + AMP + diphosphate. Its function is as follows. Catalyzes the attachment of glutamate to tRNA(Glu) in a two-step reaction: glutamate is first activated by ATP to form Glu-AMP and then transferred to the acceptor end of tRNA(Glu). This is Glutamate--tRNA ligase from Haloquadratum walsbyi (strain DSM 16790 / HBSQ001).